A 334-amino-acid chain; its full sequence is Fructose-1,6-bisphosphatase class 1 2 (334 aa).

Mg(2+)-binding residues include Glu92, Asp114, Leu116, and Asp117. Substrate-binding positions include 117–120 (DGSS), Asn208, and Lys274. Glu280 lines the Mg(2+) pocket.

Belongs to the FBPase class 1 family. In terms of assembly, homotetramer. The cofactor is Mg(2+).

The protein localises to the cytoplasm. It catalyses the reaction beta-D-fructose 1,6-bisphosphate + H2O = beta-D-fructose 6-phosphate + phosphate. It functions in the pathway carbohydrate biosynthesis; gluconeogenesis. The sequence is that of Fructose-1,6-bisphosphatase class 1 2 from Albidiferax ferrireducens (strain ATCC BAA-621 / DSM 15236 / T118) (Rhodoferax ferrireducens).